A 172-amino-acid polypeptide reads, in one-letter code: Transcriptional repressor NrdR (172 aa).

A zinc finger lies at 3–34; sequence CPFCGAPDTRVIDSRLAGEGDQVRRRRECLSC. The ATP-cone domain occupies 49–139; sequence PRVVKRDGSR…VYLSFADVQA (91 aa).

It belongs to the NrdR family. It depends on Zn(2+) as a cofactor.

Its function is as follows. Negatively regulates transcription of bacterial ribonucleotide reductase nrd genes and operons by binding to NrdR-boxes. The polypeptide is Transcriptional repressor NrdR (Thioalkalivibrio sulfidiphilus (strain HL-EbGR7)).